The primary structure comprises 809 residues: H(+)/Cl(-) exchange transporter 7 (809 aa).

The Cytoplasmic portion of the chain corresponds to 1-130; it reads MANVSKKVSW…TAFRTVEIKR (130 aa). 2 positions are modified to phosphoserine: Ser-9 and Ser-64. 2 helical membrane-spanning segments follow: residues 131-163 and 178-201; these read WVIC…YRLV and FSLL…VAFI. The short motif at 207-211 is the Selectivity filter part_1 element; sequence GSGIP. Chloride is bound at residue Ser-208. Residues 210-217 constitute an intramembrane region (helical); that stretch reads IPQIKCFL. 2 helical membrane-spanning segments follow: residues 227 to 245 and 251 to 268; these read RLKT…VVGG and EGPM…ISQG. The Selectivity filter part_2 signature appears at 249–253; that stretch reads GKEGP. 2 intramembrane regions (helical) span residues 292–304 and 308–316; these read FVSA…VSAA and PVGGVLFSL. 5 helical membrane passes run 326–345, 379–409, 414–436, 491–511, and 516–539; these read FLTW…LNFV, IPIF…FRIR, PCLQ…FVLI, PMTL…TYGL, and GVFI…LSYI. A Selectivity filter part_3 motif is present at residues 516 to 520; the sequence is GVFIP. Position 518 (Phe-518) interacts with chloride. Residues 549–563 constitute an intramembrane region (helical); it reads GKYALMGAAAQLGGI. The segment at residues 564-566 is an intramembrane region (note=Loop between two helices); it reads VRM. Residues 567 to 578 constitute an intramembrane region (helical); it reads TLSLTVIMMEAT. The segment at residues 579-582 is an intramembrane region (note=Loop between two helices); that stretch reads SSVT. The chain crosses the membrane as a helical span at residues 583 to 601; that stretch reads YGFPIMLVLMTAKIVGDVF. The Cytoplasmic portion of the chain corresponds to 602-809; sequence IEGLYDMHIQ…GLEELSLAQT (208 aa). Chloride is bound at residue Tyr-606. CBS domains lie at 635 to 699 and 745 to 803; these read MSTP…VFVE and MNPS…GLEE. ATP contacts are provided by residues 662–664 and 787–790; these read HNG and TRKD. Position 805 is a phosphoserine (Ser-805).

Belongs to the chloride channel (TC 2.A.49) family. ClC-7/CLCN7 subfamily. Chloride channel 7 are heteromers of alpha (CLCN7) and beta (OSTM1) subunits.

Its subcellular location is the lysosome membrane. The catalysed reaction is 2 chloride(in) + H(+)(out) = 2 chloride(out) + H(+)(in). Its function is as follows. Slowly voltage-gated channel mediating the exchange of chloride ions against protons. Functions as antiporter and contributes to the acidification of the lysosome lumen and may be involved in maintaining lysosomal pH. The CLC channel family contains both chloride channels and proton-coupled anion transporters that exchange chloride or another anion for protons. The presence of conserved gating glutamate residues is typical for family members that function as antiporters. The polypeptide is H(+)/Cl(-) exchange transporter 7 (CLCN7) (Bos taurus (Bovine)).